A 143-amino-acid chain; its full sequence is Nucleoside diphosphate kinase (143 aa).

ATP-binding residues include K11, F59, R87, T93, R104, and N114. The active-site Pros-phosphohistidine intermediate is the H117.

The protein belongs to the NDK family. Homotetramer. The cofactor is Mg(2+).

The protein resides in the cytoplasm. It carries out the reaction a 2'-deoxyribonucleoside 5'-diphosphate + ATP = a 2'-deoxyribonucleoside 5'-triphosphate + ADP. The catalysed reaction is a ribonucleoside 5'-diphosphate + ATP = a ribonucleoside 5'-triphosphate + ADP. Functionally, major role in the synthesis of nucleoside triphosphates other than ATP. The ATP gamma phosphate is transferred to the NDP beta phosphate via a ping-pong mechanism, using a phosphorylated active-site intermediate. The sequence is that of Nucleoside diphosphate kinase from Enterobacter sp. (strain 638).